Here is a 474-residue protein sequence, read N- to C-terminus: Mitogen-activated protein kinase pmk-3 (474 aa).

The span at 1-13 (MASVPSSSSLPVS) shows a compositional bias: low complexity. Positions 1–90 (MASVPSSSSL…EEEEDILSKP (90 aa)) are disordered. Residues 30–48 (KRSNNQSQPPESYEPNTWL) show a composition bias toward polar residues. Basic and acidic residues predominate over residues 52–69 (REQEQQKKLAAENIKKQS). One can recognise a Protein kinase domain in the interval 114-419 (YDVEPNSIEY…VEEAIQHPYL (306 aa)). ATP is bound by residues 124 to 132 (LGGGSFGNV) and Lys-150. Asp-252 (proton acceptor) is an active-site residue. At Thr-285 the chain carries Phosphothreonine. The TXY signature appears at 285–287 (TQY). Tyr-287 carries the post-translational modification Phosphotyrosine.

This sequence belongs to the protein kinase superfamily. CMGC Ser/Thr protein kinase family. MAP kinase subfamily. In terms of assembly, interacts with mak-2. May interact with vhp-1. May interact with uev-3. Mg(2+) serves as cofactor. In terms of processing, dually phosphorylated on Thr-285 and Tyr-287, which activates the enzyme. Expressed throughout the intestine.

It is found in the nucleus. Its subcellular location is the cytoplasm. The protein resides in the cell projection. It localises to the axon. The protein localises to the dendrite. It is found in the cilium. The enzyme catalyses L-seryl-[protein] + ATP = O-phospho-L-seryl-[protein] + ADP + H(+). The catalysed reaction is L-threonyl-[protein] + ATP = O-phospho-L-threonyl-[protein] + ADP + H(+). Activated by phosphorylation on threonine and tyrosine. Functionally, responds to activation by environmental stress and pro-inflammatory cytokines by phosphorylating downstream targets. Involved in axon regeneration after injury, probably downstream of dlk-1 and mkk-4 and upstream of mak-2. May phosphorylate mak-2. Plays a role in cilium length regulation, possibly by reducing rab-5 mediated endocytosis. Plays a role in the formation of muscle connections, also called muscle arm extensions, between the body wall and the motor axons in the dorsal and ventral cord. In Caenorhabditis elegans, this protein is Mitogen-activated protein kinase pmk-3 (pmk-3).